The chain runs to 313 residues: uncharacterized protein (313 aa).

Residues histidine 8, histidine 10, glutamate 126, histidine 180, histidine 207, and aspartate 262 each contribute to the a divalent metal cation site.

The protein belongs to the metallo-dependent hydrolases superfamily. TatD-type hydrolase family. The cofactor is a divalent metal cation.

Putative deoxyribonuclease. This is an uncharacterized protein from Saccharomyces cerevisiae (strain ATCC 204508 / S288c) (Baker's yeast).